The primary structure comprises 506 residues: Zinc finger protein 157 (506 aa).

The KRAB domain occupies 27-98 (VSFEDVAVDF…EEESSGHGYS (72 aa)). C2H2-type zinc fingers lie at residues 162–184 (FECHECGKAYCRKSNLVEHLRIH), 190–212 (YECGECAKTFSARSYLIAHQKTH), 218–240 (FECNECGKSFGRKSQLILHTRTH), 246–268 (YECTECGKTFSEKATLTIHQRTH), 274–296 (YECSECGKTFRVKISLTQHHRTH), 302–324 (YECGECGKNFRAKKSLNQHQRIH), 330–352 (YECGECGKFFRMKMTLNNHQRTH), 358–380 (YQCNECGKSFRVHSSLGIHQRIH), 386–408 (YECNECGNAFYVKARLIEHQRMH), 414–436 (YECSECGKIFSMKKSLCQHRRTH), 442–464 (YECSECGNAFYVKVRLIEHQRIH), and 470–492 (FECQECGKAFCRKAHLTEHQRTH).

It belongs to the krueppel C2H2-type zinc-finger protein family.

The protein localises to the nucleus. Its function is as follows. May be involved in transcriptional regulation. This chain is Zinc finger protein 157 (ZNF157), found in Homo sapiens (Human).